A 514-amino-acid polypeptide reads, in one-letter code: Glycosyltransferase-like At3g57200 (514 aa).

The segment at 1 to 23 is disordered; sequence MAGLYSSSSSSKPTLSSSPSSSS. Residues 1–39 form the signal peptide; sequence MAGLYSSSSSSKPTLSSSPSSSSSSRLFLLVTLLPLSLA. Asparagine 156, asparagine 187, asparagine 251, and asparagine 460 each carry an N-linked (GlcNAc...) asparagine glycan. The segment at 457 to 514 is disordered; that stretch reads PSKNSSTADSTSGITRESSQETGKRRVLEFHLDVDGESQASAVPPQSPPGLEATQMEL. Residues 458–473 show a composition bias toward polar residues; sequence SKNSSTADSTSGITRE. Positions 474–490 are enriched in basic and acidic residues; sequence SSQETGKRRVLEFHLDV.

Belongs to the glycosyltransferase 25 family.

Its subcellular location is the secreted. The protein resides in the cell wall. It is found in the cytoplasm. It localises to the cell membrane. Functionally, involved in the coordination between cell elongation and cellulose synthesis by promoting the expression of genes involved in cell elongation and cellulose synthesis. Acts as a regulator of plasmodesmatal permeability. Maybe a glycosyltransferase. This Arabidopsis thaliana (Mouse-ear cress) protein is Glycosyltransferase-like At3g57200.